Here is a 130-residue protein sequence, read N- to C-terminus: uncharacterized protein (130 aa).

This is an uncharacterized protein from Pasteurella multocida (strain Pm70).